A 272-amino-acid polypeptide reads, in one-letter code: Shikimate dehydrogenase (NADP(+)) (272 aa).

Shikimate-binding positions include Ser-14 to Ser-16 and Thr-61. Lys-65 functions as the Proton acceptor in the catalytic mechanism. Residue Glu-77 participates in NADP(+) binding. Shikimate-binding residues include Asn-86 and Asp-102. NADP(+) contacts are provided by residues Gly-126–Ala-130, Asn-149–Arg-154, and Met-213. Tyr-215 lines the shikimate pocket. Gly-237 serves as a coordination point for NADP(+).

It belongs to the shikimate dehydrogenase family. Homodimer.

It catalyses the reaction shikimate + NADP(+) = 3-dehydroshikimate + NADPH + H(+). Its pathway is metabolic intermediate biosynthesis; chorismate biosynthesis; chorismate from D-erythrose 4-phosphate and phosphoenolpyruvate: step 4/7. Functionally, involved in the biosynthesis of the chorismate, which leads to the biosynthesis of aromatic amino acids. Catalyzes the reversible NADPH linked reduction of 3-dehydroshikimate (DHSA) to yield shikimate (SA). The polypeptide is Shikimate dehydrogenase (NADP(+)) (Escherichia coli O81 (strain ED1a)).